The primary structure comprises 811 residues: G-type lectin S-receptor-like serine/threonine-protein kinase LECRK3 (811 aa).

Residues 1-23 (MAHLLFLPILQLLLLYCTKSAQA) form the signal peptide. The Bulb-type lectin domain occupies 24 to 153 (QLNISIGSSL…DGATKWESFG (130 aa)). The Extracellular segment spans residues 24–464 (QLNISIGSSL…DKKYWILGSS (441 aa)). 7 N-linked (GlcNAc...) asparagine glycosylation sites follow: asparagine 26, asparagine 39, asparagine 59, asparagine 219, asparagine 226, asparagine 237, and asparagine 242. The region spanning 292–344 (PENICQSIQTMVGSGACGFNSYCTIDGTKNTTSCLCPQNYKFIDDKRKYKGCR) is the EGF-like; atypical domain. Disulfide bonds link cysteine 296/cysteine 314, cysteine 308/cysteine 325, cysteine 327/cysteine 343, cysteine 389/cysteine 411, and cysteine 393/cysteine 399. Residue asparagine 321 is glycosylated (N-linked (GlcNAc...) asparagine). Residues 352-430 (CDLDETTAML…GKMDVNVPRT (79 aa)) form the PAN domain. The chain crosses the membrane as a helical span at residues 465–485 (LLFGSSVLVNFLLISVMLFGT). The Cytoplasmic portion of the chain corresponds to 486 to 811 (YCSITSRKKI…DPSSYISSLA (326 aa)). The Protein kinase domain occupies 521 to 795 (GGFQEVLGTG…KVTQMLDGAV (275 aa)). ATP contacts are provided by residues 527–535 (LGTGASGVV) and lysine 551. Residue aspartate 645 is the Proton acceptor of the active site.

This sequence belongs to the protein kinase superfamily. Ser/Thr protein kinase family.

The protein resides in the membrane. The catalysed reaction is L-seryl-[protein] + ATP = O-phospho-L-seryl-[protein] + ADP + H(+). The enzyme catalyses L-threonyl-[protein] + ATP = O-phospho-L-threonyl-[protein] + ADP + H(+). In terms of biological role, involved in resistance against the herbivorous insect brown planthopper (N.lugens, BPH). Member of the BPH3 (BPH resistance locus 3) cluster which contains LECRK1, LECRK2 and LECRK3. The polypeptide is G-type lectin S-receptor-like serine/threonine-protein kinase LECRK3 (Oryza sativa subsp. indica (Rice)).